Reading from the N-terminus, the 100-residue chain is Mini zinc finger protein 2 (100 aa).

The segment at 1–26 (MRKRQVVLRRASPEEPSRSSSTASSL) is disordered. A ZF-HD dimerization-type; degenerate zinc finger spans residues 33–83 (YGECQKNHAAAVGGYAVDGCREFMASRGEEGTVAALTCAACGCHRSFHRRE).

In terms of assembly, homo- and heterodimers. Interacts with ZHD1, ZHD3, ZHD5, ZHD8, ZHD10 and ZHD13. As to expression, mostly expressed in stems, flowers and siliques, and, to a lower extent, in inflorescence.

Its subcellular location is the cytoplasm. Its function is as follows. Inhibits zinc finger homeodomain (ZHD) transcription factors by interacting with them to prevent both their nuclear localization and their DNA-binding properties. Involved in integrating signals from multiple hormones by regulating the expression of specific genes. The polypeptide is Mini zinc finger protein 2 (MIF2) (Arabidopsis thaliana (Mouse-ear cress)).